We begin with the raw amino-acid sequence, 418 residues long: Elongation factor 1-gamma 2 (418 aa).

Residues 1–82 form the GST N-terminal domain; it reads MALVLHAGSG…YVTRSKADNP (82 aa). The 129-residue stretch at 87 to 215 folds into the GST C-terminal domain; it reads SLIEYAHIEQ…VKQAESVPPV (129 aa). Residues 210–265 are disordered; sequence ESVPPVQKKAPPPKEQKPKEAKKEAPKEAPKPKAVEKPEEEEEAPKPKPKNPLDLL. Basic and acidic residues predominate over residues 221-246; the sequence is PPKEQKPKEAKKEAPKEAPKPKAVEK. Positions 258–418 constitute an EF-1-gamma C-terminal domain; that stretch reads PKNPLDLLPP…ESLLDAKCFK (161 aa).

In terms of assembly, EF-1 is composed of four subunits: alpha, beta, delta, and gamma.

Its function is as follows. Probably plays a role in anchoring the complex to other cellular components. The chain is Elongation factor 1-gamma 2 from Oryza sativa subsp. japonica (Rice).